The sequence spans 232 residues: Phosphoribosylformylglycinamidine synthase subunit PurQ (232 aa).

Residues 3–232 enclose the Glutamine amidotransferase type-1 domain; sequence FAVIVFPGSN…SLVASALAVV (230 aa). The active-site Nucleophile is the Cys86. Residues His203 and Glu205 contribute to the active site.

As to quaternary structure, part of the FGAM synthase complex composed of 1 PurL, 1 PurQ and 2 PurS subunits.

The protein localises to the cytoplasm. The catalysed reaction is N(2)-formyl-N(1)-(5-phospho-beta-D-ribosyl)glycinamide + L-glutamine + ATP + H2O = 2-formamido-N(1)-(5-O-phospho-beta-D-ribosyl)acetamidine + L-glutamate + ADP + phosphate + H(+). It carries out the reaction L-glutamine + H2O = L-glutamate + NH4(+). It participates in purine metabolism; IMP biosynthesis via de novo pathway; 5-amino-1-(5-phospho-D-ribosyl)imidazole from N(2)-formyl-N(1)-(5-phospho-D-ribosyl)glycinamide: step 1/2. Its function is as follows. Part of the phosphoribosylformylglycinamidine synthase complex involved in the purines biosynthetic pathway. Catalyzes the ATP-dependent conversion of formylglycinamide ribonucleotide (FGAR) and glutamine to yield formylglycinamidine ribonucleotide (FGAM) and glutamate. The FGAM synthase complex is composed of three subunits. PurQ produces an ammonia molecule by converting glutamine to glutamate. PurL transfers the ammonia molecule to FGAR to form FGAM in an ATP-dependent manner. PurS interacts with PurQ and PurL and is thought to assist in the transfer of the ammonia molecule from PurQ to PurL. In Gloeobacter violaceus (strain ATCC 29082 / PCC 7421), this protein is Phosphoribosylformylglycinamidine synthase subunit PurQ.